A 581-amino-acid chain; its full sequence is Arginine--tRNA ligase (581 aa).

The short motif at 126-136 is the 'HIGH' region element; it reads PNLAKEMHVGH.

Belongs to the class-I aminoacyl-tRNA synthetase family. Monomer.

The protein localises to the cytoplasm. The enzyme catalyses tRNA(Arg) + L-arginine + ATP = L-arginyl-tRNA(Arg) + AMP + diphosphate. In Shewanella piezotolerans (strain WP3 / JCM 13877), this protein is Arginine--tRNA ligase.